A 659-amino-acid polypeptide reads, in one-letter code: Delta(6)-protoilludene synthase (659 aa).

Residues aspartate 91, asparagine 227, serine 231, and glutamate 235 each coordinate Mg(2+). The DDXXD motif motif lies at 91-95 (DEHTD). (2E,6E)-farnesyl diphosphate-binding residues include arginine 316 and tyrosine 317. The interval 528 to 586 (PQFSKTSGAPNGAHTPTTTNGSIKSNGFVSGDTNGHANGNGHVQTRSSTPSSSSSSTSS) is disordered. The segment covering 530-573 (FSKTSGAPNGAHTPTTTNGSIKSNGFVSGDTNGHANGNGHVQTR) has biased composition (polar residues). Residues 574–586 (SSTPSSSSSSTSS) show a composition bias toward low complexity.

The protein belongs to the terpene synthase family. Mg(2+) is required as a cofactor.

The catalysed reaction is (2E,6E)-farnesyl diphosphate = Delta(6)-protoilludene + diphosphate. Terpene cyclase that catalyzes the cyclization of farnesyl diphosphate (FPP) to delta(6)-protoilludene. This chain is Delta(6)-protoilludene synthase, found in Cyclocybe aegerita (Black poplar mushroom).